Here is a 105-residue protein sequence, read N- to C-terminus: uncharacterized protein (105 aa).

The tract at residues 22-105 (GSAGHGATEA…KKRIIKGKVM (84 aa)) is disordered. The span at 61 to 83 (HDSRPARGDARKRHCQENNKTDR) shows a compositional bias: basic and acidic residues. Residues 93 to 105 (NRRKKRIIKGKVM) show a composition bias toward basic residues.

This is an uncharacterized protein from Escherichia coli (strain K12).